The chain runs to 637 residues: Poly(U)-binding-splicing factor hfp (637 aa).

Composition is skewed to basic and acidic residues over residues 1–20 (MGSN…REIS) and 28–37 (TRSDSGKSTD). Positions 1–41 (MGSNDRASRSPRSDDQREISDMPATKRTRSDSGKSTDSKIP) are disordered. 2 positions are modified to phosphoserine: Ser13 and Ser30. 2 consecutive RRM domains span residues 130-208 (CRVY…RPSN) and 227-305 (NRIY…RSIT). One can recognise an RRM 3; atypical domain in the interval 537–627 (RVIILRNMVG…RRVVAELYDQ (91 aa)).

Belongs to the RRM half pint family. In terms of assembly, interacts with enc. However, given the cytoplasmic localization of enc, the relevance of such interaction is unclear. As to expression, expressed in all germline cells and within the follicle cell.

It is found in the nucleus. Splicing factor that regulates oogenesis and controls both mitosis and mRNA localization in the germline by regulating mRNA splicing of a subset of genes within the ovary. Probably acts by regulating the alternative splice site selection of the otu transcript. Also regulates the alternative splicing of eIF4E1 and grk, while it is not involved in the splicing of par-1, sqd or psq. Involved in the alternative splicing of the bicistronic pre-mRNA encoding Kdm3 and CG8176; required for the efficient production of mRNA encoding Kdm3 and Kdm3-mediated regulation of rhino-dependent piRNA production. In Drosophila melanogaster (Fruit fly), this protein is Poly(U)-binding-splicing factor hfp.